Here is a 415-residue protein sequence, read N- to C-terminus: Tyrosine--tRNA ligase (415 aa).

The short motif at 54-63 (PTGRDIHLGH) is the 'HIGH' region element. Positions 248–252 (KMSKS) match the 'KMSKS' region motif. Lys-251 serves as a coordination point for ATP. One can recognise an S4 RNA-binding domain in the interval 351–415 (AKAFYLLSAI…GKKTFRRLTR (65 aa)).

It belongs to the class-I aminoacyl-tRNA synthetase family. TyrS type 2 subfamily. In terms of assembly, homodimer.

The protein localises to the cytoplasm. It carries out the reaction tRNA(Tyr) + L-tyrosine + ATP = L-tyrosyl-tRNA(Tyr) + AMP + diphosphate + H(+). Catalyzes the attachment of tyrosine to tRNA(Tyr) in a two-step reaction: tyrosine is first activated by ATP to form Tyr-AMP and then transferred to the acceptor end of tRNA(Tyr). In Prochlorococcus marinus (strain MIT 9313), this protein is Tyrosine--tRNA ligase.